A 391-amino-acid chain; its full sequence is 3-ketoacyl-CoA thiolase (391 aa).

The active-site Acyl-thioester intermediate is the C95. Residues H347 and C377 each act as proton acceptor in the active site.

Belongs to the thiolase-like superfamily. Thiolase family. Heterotetramer of two alpha chains (FadB) and two beta chains (FadA).

Its subcellular location is the cytoplasm. The catalysed reaction is an acyl-CoA + acetyl-CoA = a 3-oxoacyl-CoA + CoA. Its pathway is lipid metabolism; fatty acid beta-oxidation. In terms of biological role, catalyzes the final step of fatty acid oxidation in which acetyl-CoA is released and the CoA ester of a fatty acid two carbons shorter is formed. The protein is 3-ketoacyl-CoA thiolase of Hahella chejuensis (strain KCTC 2396).